Consider the following 629-residue polypeptide: Hemocyanin F chain (629 aa).

The Cu cation site is built by H172, H176, H203, H324, H328, and H364. N-linked (GlcNAc...) asparagine glycans are attached at residues N395 and N447. Residues 503 to 513 (SESSVTVSHTP) are compositionally biased toward polar residues. Positions 503–522 (SESSVTVSHTPTFEELQRGE) are disordered. Residue N527 is glycosylated (N-linked (GlcNAc...) asparagine). Residues C534 and C582 are joined by a disulfide bond. N615 carries an N-linked (GlcNAc...) asparagine glycan.

It belongs to the tyrosinase family. Hemocyanin subfamily. Tarantula hemocyanin is a 24-chain polymer with seven different chains identified. As to expression, hemolymph.

The protein localises to the secreted. Its subcellular location is the extracellular space. Functionally, hemocyanins are copper-containing oxygen carriers occurring freely dissolved in the hemolymph of many mollusks and arthropods. The sequence is that of Hemocyanin F chain (HCF) from Aphonopelma sp. (American tarantula).